Consider the following 274-residue polypeptide: Sulfur carrier protein FdhD (274 aa).

The active-site Cysteine persulfide intermediate is the cysteine 121. 258-263 (FSKPGR) is a Mo-bis(molybdopterin guanine dinucleotide) binding site.

It belongs to the FdhD family.

It is found in the cytoplasm. Required for formate dehydrogenase (FDH) activity. Acts as a sulfur carrier protein that transfers sulfur from IscS to the molybdenum cofactor prior to its insertion into FDH. This chain is Sulfur carrier protein FdhD, found in Yersinia pseudotuberculosis serotype IB (strain PB1/+).